The primary structure comprises 960 residues: Isoleucine--tRNA ligase (960 aa).

Positions 60–70 match the 'HIGH' region motif; it reads PYANGSLHIGH. E573 is a binding site for L-isoleucyl-5'-AMP. Residues 614-618 carry the 'KMSKS' region motif; sequence KMSKS. K617 serves as a coordination point for ATP. 4 residues coordinate Zn(2+): C929, C932, C949, and C952.

It belongs to the class-I aminoacyl-tRNA synthetase family. IleS type 1 subfamily. In terms of assembly, monomer. Requires Zn(2+) as cofactor.

It localises to the cytoplasm. The catalysed reaction is tRNA(Ile) + L-isoleucine + ATP = L-isoleucyl-tRNA(Ile) + AMP + diphosphate. Its function is as follows. Catalyzes the attachment of isoleucine to tRNA(Ile). As IleRS can inadvertently accommodate and process structurally similar amino acids such as valine, to avoid such errors it has two additional distinct tRNA(Ile)-dependent editing activities. One activity is designated as 'pretransfer' editing and involves the hydrolysis of activated Val-AMP. The other activity is designated 'posttransfer' editing and involves deacylation of mischarged Val-tRNA(Ile). This chain is Isoleucine--tRNA ligase, found in Nostoc sp. (strain PCC 7120 / SAG 25.82 / UTEX 2576).